Reading from the N-terminus, the 237-residue chain is (5-formylfuran-3-yl)methyl phosphate synthase (237 aa).

Catalysis depends on Lys-27, which acts as the Schiff-base intermediate with substrate. Catalysis depends on Lys-85, which acts as the Proton acceptor.

Belongs to the MfnB family.

It carries out the reaction 2 D-glyceraldehyde 3-phosphate = 4-(hydroxymethyl)-2-furancarboxaldehyde phosphate + phosphate + 2 H2O. It functions in the pathway cofactor biosynthesis; methanofuran biosynthesis. Its function is as follows. Catalyzes the formation of 4-(hydroxymethyl)-2-furancarboxaldehyde phosphate (4-HFC-P) from two molecules of glyceraldehyde-3-P (GA-3-P). This Methanobrevibacter smithii (strain ATCC 35061 / DSM 861 / OCM 144 / PS) protein is (5-formylfuran-3-yl)methyl phosphate synthase.